The following is a 230-amino-acid chain: Phosphatidate cytidylyltransferase (230 aa).

The next 6 helical transmembrane spans lie at 33–53, 67–87, 95–115, 133–153, 167–187, and 206–226; these read FVIA…LVGT, IPDL…LIFL, WLIM…MIGG, WSGL…VSFI, IYLF…DLFI, and HGGV…LFLM.

Belongs to the CDS family.

It localises to the cell membrane. It carries out the reaction a 1,2-diacyl-sn-glycero-3-phosphate + CTP + H(+) = a CDP-1,2-diacyl-sn-glycerol + diphosphate. The protein operates within phospholipid metabolism; CDP-diacylglycerol biosynthesis; CDP-diacylglycerol from sn-glycerol 3-phosphate: step 3/3. This Rickettsia conorii (strain ATCC VR-613 / Malish 7) protein is Phosphatidate cytidylyltransferase (cdsA).